Consider the following 127-residue polypeptide: 3-aminoacrylate deaminase RutC (127 aa).

The protein belongs to the RutC family.

It carries out the reaction (Z)-3-aminoacrylate + H2O + H(+) = 3-oxopropanoate + NH4(+). Its function is as follows. Involved in pyrimidine catabolism. Catalyzes the deamination of 3-aminoacrylate to malonic semialdehyde, a reaction that can also occur spontaneously. RutC may facilitate the reaction and modulate the metabolic fitness, rather than catalyzing essential functions. This Pseudomonas syringae pv. syringae (strain B728a) protein is 3-aminoacrylate deaminase RutC.